We begin with the raw amino-acid sequence, 295 residues long: Small ribosomal subunit protein uS2 (295 aa).

Ser2 carries the N-acetylserine modification. Residue Ser43 is modified to Phosphoserine. N6-acetyllysine is present on Lys52. The interval Thr54–Gln113 is interaction with PPP1R16B. At Lys89 the chain carries N6-acetyllysine; alternate. Lys89 is covalently cross-linked (Glycyl lysine isopeptide (Lys-Gly) (interchain with G-Cter in SUMO2); alternate). Thr97 is modified (phosphothreonine). Laminin-binding stretches follow at residues Ile161–Arg180 and Arg205–Gly229. 5 [DE]-W-[ST] repeats span residues Glu230 to Thr232, Asp247 to Ser249, Asp266 to Ser268, Asp275 to Ser277, and Glu293 to Ser295. The laminin-binding stretch occupies residues Gln242–Ser295. Residues Asp266–Ser295 are disordered.

The protein belongs to the universal ribosomal protein uS2 family. Monomer (37LRP) and homodimer (67LR). Component of the small ribosomal subunit. Mature ribosomes consist of a small (40S) and a large (60S) subunit. The 40S subunit contains about 33 different proteins and 1 molecule of RNA (18S). The 60S subunit contains about 49 different proteins and 3 molecules of RNA (28S, 5.8S and 5S). Interacts with RPS21. Interacts with several laminins including at least LAMB1. Interacts with MDK. The mature dimeric form interacts with PPP1R16B (via its fourth ankyrin repeat). Interacts with PPP1CA only in the presence of PPP1R16B. Post-translationally, acylated. Acylation may be a prerequisite for conversion of the monomeric 37 kDa laminin receptor precursor (37LRP) to the mature dimeric 67 kDa laminin receptor (67LR), and may provide a mechanism for membrane association. In terms of processing, cleaved by stromelysin-3 (ST3) at the cell surface. Cleavage by stromelysin-3 may be a mechanism to alter cell-extracellular matrix interactions.

The protein resides in the cell membrane. It is found in the cytoplasm. Its subcellular location is the nucleus. Required for the assembly and/or stability of the 40S ribosomal subunit. Required for the processing of the 20S rRNA-precursor to mature 18S rRNA in a late step of the maturation of 40S ribosomal subunits. Also functions as a cell surface receptor for laminin. Plays a role in cell adhesion to the basement membrane and in the consequent activation of signaling transduction pathways. May play a role in cell fate determination and tissue morphogenesis. Also acts as a receptor for several other ligands, including the pathogenic prion protein, viruses, and bacteria. Acts as a PPP1R16B-dependent substrate of PPP1CA. The protein is Small ribosomal subunit protein uS2 of Bos taurus (Bovine).